The sequence spans 673 residues: Protein kinase ORF74 (673 aa).

The 277-residue stretch at 128–404 folds into the Protein kinase domain; the sequence is TDTDEAVARG…ARELLVYPRY (277 aa). The Proton acceptor role is filled by Asp252. The segment at 340–364 is disordered; sequence MDNDALDSRRTGRDGDPVNPEGFGT. Over residues 345 to 355 the composition is skewed to basic and acidic residues; sequence LDSRRTGRDGD.

This sequence belongs to the protein kinase superfamily. Ser/Thr protein kinase family.

It catalyses the reaction L-seryl-[protein] + ATP = O-phospho-L-seryl-[protein] + ADP + H(+). The catalysed reaction is L-threonyl-[protein] + ATP = O-phospho-L-threonyl-[protein] + ADP + H(+). In Ictalurid herpesvirus 1 (strain Auburn) (IcHV-1), this protein is Protein kinase ORF74 (ORF74).